The following is a 127-amino-acid chain: Large ribosomal subunit protein eL18 (127 aa).

It belongs to the eukaryotic ribosomal protein eL18 family.

In Methanopyrus kandleri (strain AV19 / DSM 6324 / JCM 9639 / NBRC 100938), this protein is Large ribosomal subunit protein eL18.